Reading from the N-terminus, the 312-residue chain is Ribosomal RNA small subunit methyltransferase H (312 aa).

Residues 34–36 (AGH), aspartate 54, phenylalanine 81, aspartate 102, and glutamine 109 each bind S-adenosyl-L-methionine.

It belongs to the methyltransferase superfamily. RsmH family.

The protein localises to the cytoplasm. It carries out the reaction cytidine(1402) in 16S rRNA + S-adenosyl-L-methionine = N(4)-methylcytidine(1402) in 16S rRNA + S-adenosyl-L-homocysteine + H(+). Its function is as follows. Specifically methylates the N4 position of cytidine in position 1402 (C1402) of 16S rRNA. The sequence is that of Ribosomal RNA small subunit methyltransferase H from Geobacter sp. (strain M21).